The sequence spans 353 residues: Photosystem II D2 protein (353 aa).

N-acetylthreonine is present on Thr-2. At Thr-2 the chain carries Phosphothreonine. Residues 41 to 61 form a helical membrane-spanning segment; the sequence is CAYFALGGWLTGTTFVTSWYT. Residue His-118 participates in chlorophyll a binding. The chain crosses the membrane as a helical span at residues 125 to 141; the sequence is GFMLRQFELARSVQLRP. 2 residues coordinate pheophytin a: Gln-130 and Asn-143. The chain crosses the membrane as a helical span at residues 153 to 166; it reads VFVSVFLIYPLGQS. His-198 provides a ligand contact to chlorophyll a. Residues 208-228 form a helical membrane-spanning segment; sequence AALLCAIHGATVENTLFEDGD. A plastoquinone-binding residues include His-215 and Phe-262. His-215 is a binding site for Fe cation. His-269 lines the Fe cation pocket. Residues 279–295 form a helical membrane-spanning segment; that stretch reads GLWMSAIGVVGLALNLR.

This sequence belongs to the reaction center PufL/M/PsbA/D family. In terms of assembly, PSII is composed of 1 copy each of membrane proteins PsbA, PsbB, PsbC, PsbD, PsbE, PsbF, PsbH, PsbI, PsbJ, PsbK, PsbL, PsbM, PsbT, PsbX, PsbY, PsbZ, Psb30/Ycf12, at least 3 peripheral proteins of the oxygen-evolving complex and a large number of cofactors. It forms dimeric complexes. Requires The D1/D2 heterodimer binds P680, chlorophylls that are the primary electron donor of PSII, and subsequent electron acceptors. It shares a non-heme iron and each subunit binds pheophytin, quinone, additional chlorophylls, carotenoids and lipids. There is also a Cl(-1) ion associated with D1 and D2, which is required for oxygen evolution. The PSII complex binds additional chlorophylls, carotenoids and specific lipids. as cofactor.

It localises to the plastid. The protein localises to the chloroplast thylakoid membrane. The catalysed reaction is 2 a plastoquinone + 4 hnu + 2 H2O = 2 a plastoquinol + O2. Its function is as follows. Photosystem II (PSII) is a light-driven water:plastoquinone oxidoreductase that uses light energy to abstract electrons from H(2)O, generating O(2) and a proton gradient subsequently used for ATP formation. It consists of a core antenna complex that captures photons, and an electron transfer chain that converts photonic excitation into a charge separation. The D1/D2 (PsbA/PsbD) reaction center heterodimer binds P680, the primary electron donor of PSII as well as several subsequent electron acceptors. D2 is needed for assembly of a stable PSII complex. The polypeptide is Photosystem II D2 protein (Zygnema circumcarinatum (Green alga)).